A 416-amino-acid polypeptide reads, in one-letter code: Imidazolonepropionase (416 aa).

Fe(3+) contacts are provided by H82 and H84. The Zn(2+) site is built by H82 and H84. 4-imidazolone-5-propanoate contacts are provided by R91, Y154, and H187. Y154 contacts N-formimidoyl-L-glutamate. H252 lines the Fe(3+) pocket. Residue H252 coordinates Zn(2+). E255 is a 4-imidazolone-5-propanoate binding site. D326 provides a ligand contact to Fe(3+). Position 326 (D326) interacts with Zn(2+). N-formimidoyl-L-glutamate is bound by residues N328 and G330. S331 contacts 4-imidazolone-5-propanoate.

The protein belongs to the metallo-dependent hydrolases superfamily. HutI family. The cofactor is Zn(2+). Requires Fe(3+) as cofactor.

It localises to the cytoplasm. The catalysed reaction is 4-imidazolone-5-propanoate + H2O = N-formimidoyl-L-glutamate. Its pathway is amino-acid degradation; L-histidine degradation into L-glutamate; N-formimidoyl-L-glutamate from L-histidine: step 3/3. Functionally, catalyzes the hydrolytic cleavage of the carbon-nitrogen bond in imidazolone-5-propanoate to yield N-formimidoyl-L-glutamate. It is the third step in the universal histidine degradation pathway. The sequence is that of Imidazolonepropionase from Parabacteroides distasonis (strain ATCC 8503 / DSM 20701 / CIP 104284 / JCM 5825 / NCTC 11152).